We begin with the raw amino-acid sequence, 523 residues long: Asparagine--tRNA ligase (523 aa).

Positions 329-350 are disordered; that stretch reads SARGDTPLAARSTARTPPVRTP.

This sequence belongs to the class-II aminoacyl-tRNA synthetase family. As to quaternary structure, homodimer.

It is found in the cytoplasm. The catalysed reaction is tRNA(Asn) + L-asparagine + ATP = L-asparaginyl-tRNA(Asn) + AMP + diphosphate + H(+). This chain is Asparagine--tRNA ligase, found in Treponema pallidum (strain Nichols).